A 707-amino-acid chain; its full sequence is MNPIVKQFKYGQHTVTLETGAIARQATAAVMASMDDTTVFVSVVAKKEVKEGQDFFPLTVDYQERSYAAGKIPGGFFKREGRPSEGETLIARLIDRPIRPLFPEGFLNEIQIIATVVSVNPQISPDLVAMIGASAALALSGVPFNGPIGAARVGFINDQFVLNPTMAEQKQSRLDLVVAGTDKAVLMVESEADILTEEQMLAAVVFGHQQQQVVIEAIKELVKEAGKPRWDWVAPEPDTALINQVKVIAESRLGDAYRITEKQVRYEQIDAIKADVIAQITAENEEVSEGKIVDIFTALESQIVRGRIIAGEPRIDGRTVDTVRALDICTGVLPRTHGSAIFTRGETQALAVVTLGTERDAQILDELTGERQDTFLFHYNFPPYSVGETGRVGSPKRREIGHGRLAKRGVAAVMPSISEFPYVVRVVSEITESNGSSSMASVCGASLALMDAGVPVKSAVAGIAMGLVKEEDKFVVLSDILGDEDHLGDMDFKVAGTRTGVTALQMDIKIEGITPEIMQIALNQAKSARMHILGVMEQAIAAPRAEISEYAPRIYTMKIDPKKIKDVIGKGGATIRTLTEETGTSIDIDDDGTVKIAAIDGNAVKEVMARIEEITAEVEAGAVYTGKVTRLADFGAFVAILGNKEGLVHISQIAEERVEKVSDYLQVGQDVQVKVVEIDRQGRIRLTMKDIVSKAENADAQTDIVEE.

2 residues coordinate Mg(2+): aspartate 485 and aspartate 491. One can recognise a KH domain in the interval 552–611 (PRIYTMKIDPKKIKDVIGKGGATIRTLTEETGTSIDIDDDGTVKIAAIDGNAVKEVMARI). In terms of domain architecture, S1 motif spans 621–689 (GAVYTGKVTR…RQGRIRLTMK (69 aa)).

The protein belongs to the polyribonucleotide nucleotidyltransferase family. As to quaternary structure, component of the RNA degradosome, which is a multiprotein complex involved in RNA processing and mRNA degradation. Requires Mg(2+) as cofactor.

The protein localises to the cytoplasm. It catalyses the reaction RNA(n+1) + phosphate = RNA(n) + a ribonucleoside 5'-diphosphate. Functionally, involved in mRNA degradation. Catalyzes the phosphorolysis of single-stranded polyribonucleotides processively in the 3'- to 5'-direction. The protein is Polyribonucleotide nucleotidyltransferase of Actinobacillus succinogenes (strain ATCC 55618 / DSM 22257 / CCUG 43843 / 130Z).